A 143-amino-acid chain; its full sequence is MKLLKNNIYINVYLKNKQEIFEFVFKKFKEDGAVLDSFLPAIVERDKAASVAIGNYLFLPHPVYDEIANIQKEKMVFIGLKDVINIDGQPIKFICGLALKGEHQMDALQSLAIAFSDPEEVEKLVKDKDLTQDKVLEFLAKHN.

The PTS EIIA type-2 domain occupies 1-142 (MKLLKNNIYI…DKVLEFLAKH (142 aa)). The Tele-phosphohistidine intermediate role is filled by histidine 61. The residue at position 61 (histidine 61) is a Phosphohistidine; by HPr.

The protein localises to the cytoplasm. In terms of biological role, the phosphoenolpyruvate-dependent sugar phosphotransferase system (sugar PTS), a major carbohydrate active transport system, catalyzes the phosphorylation of incoming sugar substrates concomitantly with their translocation across the cell membrane. The enzyme II CmtAB PTS system is involved in D-mannitol transport. The protein is Mannitol-specific phosphotransferase enzyme IIA component (mtlF) of Mycoplasma pneumoniae (strain ATCC 29342 / M129 / Subtype 1) (Mycoplasmoides pneumoniae).